Here is a 71-residue protein sequence, read N- to C-terminus: Large ribosomal subunit protein bL31 (71 aa).

Zn(2+) is bound by residues cysteine 16, cysteine 18, cysteine 38, and cysteine 41.

Belongs to the bacterial ribosomal protein bL31 family. Type A subfamily. As to quaternary structure, part of the 50S ribosomal subunit. It depends on Zn(2+) as a cofactor.

Functionally, binds the 23S rRNA. The sequence is that of Large ribosomal subunit protein bL31 from Francisella tularensis subsp. mediasiatica (strain FSC147).